Consider the following 125-residue polypeptide: Large ribosomal subunit protein uL22c (125 aa).

The protein belongs to the universal ribosomal protein uL22 family. In terms of assembly, part of the 50S ribosomal subunit.

It is found in the plastid. The protein localises to the chloroplast. This protein binds specifically to 23S rRNA. Its function is as follows. The globular domain of the protein is located near the polypeptide exit tunnel on the outside of the subunit, while an extended beta-hairpin is found that lines the wall of the exit tunnel in the center of the 70S ribosome. In Huperzia lucidula (Shining clubmoss), this protein is Large ribosomal subunit protein uL22c (rpl22).